We begin with the raw amino-acid sequence, 365 residues long: Aminomethyltransferase (365 aa).

Belongs to the GcvT family. In terms of assembly, the glycine cleavage system is composed of four proteins: P, T, L and H.

The catalysed reaction is N(6)-[(R)-S(8)-aminomethyldihydrolipoyl]-L-lysyl-[protein] + (6S)-5,6,7,8-tetrahydrofolate = N(6)-[(R)-dihydrolipoyl]-L-lysyl-[protein] + (6R)-5,10-methylene-5,6,7,8-tetrahydrofolate + NH4(+). Functionally, the glycine cleavage system catalyzes the degradation of glycine. This is Aminomethyltransferase from Desulfitobacterium hafniense (strain DSM 10664 / DCB-2).